The chain runs to 64 residues: Beta-defensin 1 (64 aa).

Positions M1–T22 are cleaved as a signal peptide. 3 disulfides stabilise this stretch: C31–C60, C38–C53, and C43–C61.

This sequence belongs to the beta-defensin family. In terms of assembly, monomer. Homodimer.

Its subcellular location is the secreted. It localises to the membrane. Has bactericidal activity. May act as a ligand for C-C chemokine receptor CCR6. Positively regulates the sperm motility and bactericidal activity in a CCR6-dependent manner. Binds to CCR6 and triggers Ca2+ mobilization in the sperm which is important for its motility. This chain is Beta-defensin 1 (DEFB1), found in Ovis aries (Sheep).